The primary structure comprises 588 residues: Pre-mRNA-splicing ATP-dependent RNA helicase PRP28 (588 aa).

Positions 15–94 (NKKKGLDENT…PSKQNGSKFH (80 aa)) are disordered. Composition is skewed to basic and acidic residues over residues 35–49 (NKQE…KENE) and 60–83 (AKVE…DKKR). Residue serine 69 is modified to Phosphoserine. The Q motif motif lies at 172 to 202 (RNWEELNIIPRDLLRVIIQELRFPSPTPIQR). In terms of domain architecture, Helicase ATP-binding spans 208-399 (VCNMKQYRDF…AGYMQKPVYA (192 aa)). An ATP-binding site is contributed by 221 to 228 (ASTGSGKT). The short motif at 341-344 (DEAD) is the DEAD box element. Residues 427 to 579 (KLKPIVAKYD…EAVKNKYNVG (153 aa)) enclose the Helicase C-terminal domain.

Belongs to the DEAD box helicase family. DDX23/PRP28 subfamily. In terms of assembly, component of the U5 snRNP complex, composed of at least BRR2, PRP8, PRP28, DIB1, LIN1, SMB1, SMD1, SMD2, SMD3, SME1, SMX2, SMX3, and SNU114, associated with the U5 snRNA.

It localises to the cytoplasm. Its subcellular location is the nucleus. It catalyses the reaction ATP + H2O = ADP + phosphate + H(+). Functionally, ATP-dependent RNA helicase involved in mRNA splicing. May destabilize the U1/5'-splice site duplex to permit an effective competition for the 5'-splice site by the U6 snRNA, resulting in the switch between U1 and U6 at the 5'-splice site. May also act to unwind the U4/U6 base-pairing interaction in the U4/U6/U5 snRNP, facilitating the first covalent step of splicing. The protein is Pre-mRNA-splicing ATP-dependent RNA helicase PRP28 (PRP28) of Saccharomyces cerevisiae (strain ATCC 204508 / S288c) (Baker's yeast).